The chain runs to 339 residues: Cullin-associated NEDD8-dissociated protein 1, N-terminal part (339 aa).

2 HEAT repeats span residues 5–42 and 50–87; these read HTIQ…NPCS and ASAT…RLPL.

As to quaternary structure, interacts with candA-C. Interacts with unneddylated cullins culA and culD; interaction occurs only when complexed with candA-C.

It localises to the nucleus. Functionally, assembly factor of SCF (SKP1-CUL1-F-box protein) E3 ubiquitin ligase complexes that promotes the exchange of the substrate-recognition F-box subunit in SCF complexes, thereby playing a key role in the cellular repertoire of SCF complexes. Acts as a F-box protein exchange factor when interacting with candA-C. The sequence is that of Cullin-associated NEDD8-dissociated protein 1, N-terminal part (candA-N) from Emericella nidulans (strain FGSC A4 / ATCC 38163 / CBS 112.46 / NRRL 194 / M139) (Aspergillus nidulans).